The primary structure comprises 430 residues: Phosphomethylpyrimidine synthase (430 aa).

Substrate contacts are provided by residues N67, M96, Y125, H161, 183–185 (SRG), 224–227 (DALR), and E263. H267 contributes to the Zn(2+) binding site. Position 290 (Y290) interacts with substrate. H331 provides a ligand contact to Zn(2+). Residues C406, C409, and C413 each contribute to the [4Fe-4S] cluster site.

The protein belongs to the ThiC family. As to quaternary structure, homodimer. [4Fe-4S] cluster serves as cofactor.

The catalysed reaction is 5-amino-1-(5-phospho-beta-D-ribosyl)imidazole + S-adenosyl-L-methionine = 4-amino-2-methyl-5-(phosphooxymethyl)pyrimidine + CO + 5'-deoxyadenosine + formate + L-methionine + 3 H(+). The protein operates within cofactor biosynthesis; thiamine diphosphate biosynthesis. In terms of biological role, catalyzes the synthesis of the hydroxymethylpyrimidine phosphate (HMP-P) moiety of thiamine from aminoimidazole ribotide (AIR) in a radical S-adenosyl-L-methionine (SAM)-dependent reaction. The protein is Phosphomethylpyrimidine synthase of Campylobacter jejuni subsp. jejuni serotype O:2 (strain ATCC 700819 / NCTC 11168).